Consider the following 2359-residue polypeptide: Pre-mRNA-processing-splicing factor 8A (2359 aa).

A disordered region spans residues 1–54 (MWNNNDGMPLAPPGTGGSMMPPPPAAHPSYTALPPPSNPTPPVEPTPEEAEAKL). Residues 33 to 45 (LPPPSNPTPPVEP) show a composition bias toward pro residues. The region spanning 2127–2258 (TYIMPKNILK…LTSYKLTQTG (132 aa)) is the MPN domain.

In terms of assembly, interacts with CLO.

Its subcellular location is the nucleus. In terms of biological role, functions as a scaffold that mediates the ordered assembly of spliceosomal proteins and snRNAs. Required for the assembly of the U4/U6-U5 tri-snRNP complex. Required for embryo development. Required for splicing efficiency of COOLAIR introns and usage of the proximal poly(A) site. COOLAIR is a set of long non-coding antisense transcripts produced at the FLOWERING LOCUS C (FLC). COOLAIR initiates just downstream of the major sense transcript poly(A) site and terminates either early or extends into the FLC promoter region. Splicing of COOLAIR by PRP8A is functionally important for FLC regulation. This Arabidopsis thaliana (Mouse-ear cress) protein is Pre-mRNA-processing-splicing factor 8A.